A 134-amino-acid chain; its full sequence is Agouti-related protein (134 aa).

The signal sequence occupies residues 1–20; that stretch reads MLTTMLLSCALLLAMPTMLG. Residues 21-84 constitute a propeptide that is removed on maturation; it reads AQIGLAPLEG…VLDPEGRKAR (64 aa). Disulfide bonds link Cys89–Cys104, Cys96–Cys110, Cys103–Cys121, Cys107–Cys131, and Cys112–Cys119. An Agouti domain is found at 89–131; that stretch reads CVRLHESCLGHQVPCCDPCATCYCRFFNAFCYCRKLGTATNPC. An interaction with melanocortin receptors region spans residues 113 to 115; that stretch reads RFF.

In terms of assembly, interacts with melanocortin receptors MC3R, MC4R and MC5R.

It is found in the secreted. The protein resides in the golgi apparatus lumen. Its function is as follows. Plays a role in weight homeostasis. Involved in the control of feeding behavior through the central melanocortin system. Acts as alpha melanocyte-stimulating hormone antagonist by inhibiting cAMP production mediated by stimulation of melanocortin receptors within the hypothalamus and adrenal gland. Has very low activity with MC5R. Is an inverse agonist for MC3R and MC4R being able to suppress their constitutive activity. It promotes MC3R and MC4R endocytosis in an arrestin-dependent manner. This is Agouti-related protein (AGRP) from Sus scrofa (Pig).